A 146-amino-acid polypeptide reads, in one-letter code: Allograft inflammatory factor 1 (146 aa).

An N-acetylserine modification is found at Ser-1. Lys-10 carries the N6-acetyllysine modification. The residue at position 38 (Ser-38) is a Phosphoserine. The EF-hand 1 domain occupies 44-79 (RKLEAFKQKYMEFDLNGNGDIDIMSLKRMLEKLGVP). Ca(2+)-binding residues include Asp-57, Asn-59, Asn-61, Asp-63, and Thr-99. The EF-hand 2; degenerate domain maps to 81–115 (THLELKKLIKEVSSGSGETFSYSIFLKMMLGKRSA). The disordered stretch occupies residues 127–146 (AREQEKPTGPPAKKAISELP).

As to quaternary structure, homodimer (Potential). Monomer. Interacts with LCP1. Microglial cells in the central nervous system and dendritic cells and macrophages in several organs.

It is found in the cytoplasm. It localises to the cytoskeleton. The protein resides in the cell projection. The protein localises to the ruffle membrane. Its subcellular location is the phagocytic cup. Its function is as follows. Actin-binding protein that enhances membrane ruffling and RAC activation. Enhances the actin-bundling activity of LCP1. Binds calcium. Plays a role in RAC signaling and in phagocytosis. May play a role in macrophage activation and function. Promotes the proliferation of vascular smooth muscle cells and of T-lymphocytes. Enhances lymphocyte migration. Plays a role in vascular inflammation. Has a dual influence on glucose-induced insulin secretion: inhibition at low concentration and stimulation at high concentrations. This chain is Allograft inflammatory factor 1 (AIF1), found in Sus scrofa (Pig).